A 374-amino-acid polypeptide reads, in one-letter code: MNLQHTPLHDLCRDAGGRMVPFAGWDMPVQFSGLLQEHQAVRQQVGMFDISHMGVLRLEGTNPKDTLQALVPTDLNRIGPGEACYTVLLNETGGILDDLVVYDLGTNKQDSQSLLIVINAACSETDTIWLKQHLQPAGIALSDAKNNGVLLALQGPQATKVLERLSGESLASLPRFGHRQVQFYGLGAEDPSSVFIARTGYTGEDGFELLLEAEAGRALWLQLRAEGVIPCGLGSRDTLRLEAAMHLYGQDMDINTTPFEAGLGWLVHLEMPAPFMGRTALEQQAEQGPIRRLVGLKLSGRAIARHGYPLLHNNNKVGEITSGTWSPSLGEAIALGYLPTALARIGNEVAVEIRGKHHPATVVKRPFYRRPSLS.

It belongs to the GcvT family. As to quaternary structure, the glycine cleavage system is composed of four proteins: P, T, L and H.

The catalysed reaction is N(6)-[(R)-S(8)-aminomethyldihydrolipoyl]-L-lysyl-[protein] + (6S)-5,6,7,8-tetrahydrofolate = N(6)-[(R)-dihydrolipoyl]-L-lysyl-[protein] + (6R)-5,10-methylene-5,6,7,8-tetrahydrofolate + NH4(+). In terms of biological role, the glycine cleavage system catalyzes the degradation of glycine. The protein is Aminomethyltransferase of Prochlorococcus marinus (strain MIT 9303).